The following is a 717-amino-acid chain: Ubiquitin carboxyl-terminal hydrolase 11 (717 aa).

Residues 231–268 (ATAPPVHSLEVSSQIRDSSQDSSSSLSKVEKPKEEEGK) are disordered. The segment covering 242–257 (SSQIRDSSQDSSSSLS) has biased composition (low complexity). Over residues 258-268 (KVEKPKEEEGK) the composition is skewed to basic and acidic residues. Positions 298 to 707 (TGLQNPCNTC…EVYVLFYERM (410 aa)) constitute a USP domain. Cys-307 acts as the Nucleophile in catalysis. Residues 531-577 (KKEEITSQKKKSTIFGFHSRSRSKSPHHHHHHHHSSDDSTKNAKKRN) form a disordered region. Residues 549–564 (SRSRSKSPHHHHHHHH) are compositionally biased toward basic residues. Residue His-649 is the Proton acceptor of the active site.

It belongs to the peptidase C19 family.

The enzyme catalyses Thiol-dependent hydrolysis of ester, thioester, amide, peptide and isopeptide bonds formed by the C-terminal Gly of ubiquitin (a 76-residue protein attached to proteins as an intracellular targeting signal).. The polypeptide is Ubiquitin carboxyl-terminal hydrolase 11 (UBP11) (Saccharomyces cerevisiae (strain ATCC 204508 / S288c) (Baker's yeast)).